Here is a 371-residue protein sequence, read N- to C-terminus: Chaperone protein DnaJ (371 aa).

Residues 5-69 enclose the J domain; sequence DYYEVLGLSK…QKRAQYDQFG (65 aa). The CR-type zinc-finger motif lies at 133 to 215; sequence GKELNVEIPV…CHGSGKVRKR (83 aa). Residues C146, C149, C163, C166, C189, C192, C203, and C206 each coordinate Zn(2+). CXXCXGXG motif repeat units lie at residues 146–153, 163–170, 189–196, and 203–210; these read CDTCKGSG, CKHCSGSG, CGHCSGTG, and CTTCHGSG.

The protein belongs to the DnaJ family. In terms of assembly, homodimer. It depends on Zn(2+) as a cofactor.

The protein resides in the cytoplasm. In terms of biological role, participates actively in the response to hyperosmotic and heat shock by preventing the aggregation of stress-denatured proteins and by disaggregating proteins, also in an autonomous, DnaK-independent fashion. Unfolded proteins bind initially to DnaJ; upon interaction with the DnaJ-bound protein, DnaK hydrolyzes its bound ATP, resulting in the formation of a stable complex. GrpE releases ADP from DnaK; ATP binding to DnaK triggers the release of the substrate protein, thus completing the reaction cycle. Several rounds of ATP-dependent interactions between DnaJ, DnaK and GrpE are required for fully efficient folding. Also involved, together with DnaK and GrpE, in the DNA replication of plasmids through activation of initiation proteins. This is Chaperone protein DnaJ from Bacillus cereus (strain ATCC 10987 / NRS 248).